The sequence spans 198 residues: Ribonuclease HII (198 aa).

An RNase H type-2 domain is found at 2-191 (VLECGVDETG…IRELLVGKDN (190 aa)). 3 residues coordinate a divalent metal cation: Asp-8, Glu-9, and Asp-100.

This sequence belongs to the RNase HII family. Mn(2+) serves as cofactor. Mg(2+) is required as a cofactor.

The protein resides in the cytoplasm. The enzyme catalyses Endonucleolytic cleavage to 5'-phosphomonoester.. In terms of biological role, endonuclease that specifically degrades the RNA of RNA-DNA hybrids. The protein is Ribonuclease HII of Desulforamulus reducens (strain ATCC BAA-1160 / DSM 100696 / MI-1) (Desulfotomaculum reducens).